A 479-amino-acid polypeptide reads, in one-letter code: FAD-dependent monooxygenase ausM (479 aa).

FAD-binding residues include Glu40, Gly54, and Arg113. The active site involves Tyr224. Asn289 carries N-linked (GlcNAc...) asparagine glycosylation. Asp316 and Ala329 together coordinate FAD. Residues 449 to 469 form a helical membrane-spanning segment; it reads TLPWLVISLPVLASMLCYLVY.

The protein belongs to the paxM FAD-dependent monooxygenase family. FAD is required as a cofactor.

The protein resides in the membrane. The protein operates within secondary metabolite biosynthesis; terpenoid biosynthesis. In terms of biological role, FAD-dependent monooxygenase; part of the gene cluster B that mediates the biosynthesis of austinol and dehydroaustinol, two fungal meroterpenoids. The first step of the pathway is the synthesis of 3,5-dimethylorsellinic acid by the polyketide synthase ausA. 3,5-dimethylorsellinic acid is then prenylated by the polyprenyl transferase ausN. Further epoxidation by the FAD-dependent monooxygenase ausM and cyclization by the probable terpene cyclase ausL lead to the formation of protoaustinoid A. Protoaustinoid A is then oxidized to spiro-lactone preaustinoid A3 by the combined action of the FAD-binding monooxygenases ausB and ausC, and the dioxygenase ausE. Acid-catalyzed keto-rearrangement and ring contraction of the tetraketide portion of preaustinoid A3 by ausJ lead to the formation of preaustinoid A4. The aldo-keto reductase ausK, with the help of ausH, is involved in the next step by transforming preaustinoid A4 into isoaustinone which is in turn hydroxylated by the P450 monooxygenase ausI to form austinolide. Finally, the cytochrome P450 monooxygenase ausG modifies austinolide to austinol. Austinol can be further modified to dehydroaustinol which forms a diffusible complex with diorcinol that initiates conidiation. Due to genetic rearrangements of the clusters and the subsequent loss of some enzymes, the end products of the Emericella nidulans austinoid biosynthesis clusters are austinol and dehydroaustinol, even if additional enzymes, such as the O-acetyltransferase ausQ and the cytochrome P450 monooxygenase ausR are still functional. This chain is FAD-dependent monooxygenase ausM, found in Emericella nidulans (strain FGSC A4 / ATCC 38163 / CBS 112.46 / NRRL 194 / M139) (Aspergillus nidulans).